A 337-amino-acid chain; its full sequence is Phospholipase A1 1 (337 aa).

The N-terminal stretch at 1 to 21 (MNFKYSILFICFVKVLDNCYA) is a signal peptide. A propeptide spanning residues 22 to 35 (ADDLTTLRNGTLDR) is cleaved from the precursor. Cys-41 and Cys-124 are disulfide-bonded. Catalysis depends on Ser-174, which acts as the Nucleophile. Residue Asp-202 is the Charge relay system of the active site. Cystine bridges form between Cys-213–Cys-218 and Cys-256–Cys-261. Residue His-263 is the Charge relay system of the active site. Intrachain disulfides connect Cys-278/Cys-305, Cys-279/Cys-330, and Cys-298/Cys-303.

This sequence belongs to the AB hydrolase superfamily. Lipase family. In terms of tissue distribution, expressed by the venom gland.

It is found in the secreted. It carries out the reaction a 1,2-diacyl-sn-glycero-3-phosphocholine + H2O = a 2-acyl-sn-glycero-3-phosphocholine + a fatty acid + H(+). Functionally, catalyzes the hydrolysis of phosphatidylcholine with phospholipase A1 activity. May act as an allergen and induce hemolytic activity. The polypeptide is Phospholipase A1 1 (Polistes dominula (European paper wasp)).